The primary structure comprises 546 residues: Glucose-6-phosphate isomerase 1 (546 aa).

E353 (proton donor) is an active-site residue. Residues H384 and K512 contribute to the active site.

It belongs to the GPI family.

The protein localises to the cytoplasm. The enzyme catalyses alpha-D-glucose 6-phosphate = beta-D-fructose 6-phosphate. The protein operates within carbohydrate biosynthesis; gluconeogenesis. It participates in carbohydrate degradation; glycolysis; D-glyceraldehyde 3-phosphate and glycerone phosphate from D-glucose: step 2/4. Functionally, catalyzes the reversible isomerization of glucose-6-phosphate to fructose-6-phosphate. The protein is Glucose-6-phosphate isomerase 1 of Colwellia psychrerythraea (strain 34H / ATCC BAA-681) (Vibrio psychroerythus).